The chain runs to 429 residues: Glutamate-1-semialdehyde 2,1-aminomutase 2 (429 aa).

Residue lysine 268 is modified to N6-(pyridoxal phosphate)lysine.

Belongs to the class-III pyridoxal-phosphate-dependent aminotransferase family. HemL subfamily. Homodimer. Pyridoxal 5'-phosphate is required as a cofactor.

It localises to the cytoplasm. It carries out the reaction (S)-4-amino-5-oxopentanoate = 5-aminolevulinate. Its pathway is porphyrin-containing compound metabolism; protoporphyrin-IX biosynthesis; 5-aminolevulinate from L-glutamyl-tRNA(Glu): step 2/2. The chain is Glutamate-1-semialdehyde 2,1-aminomutase 2 from Staphylococcus carnosus (strain TM300).